A 327-amino-acid chain; its full sequence is GMP reductase (327 aa).

C176 acts as the Thioimidate intermediate in catalysis. 205 to 228 contacts NADP(+); sequence IIADGGIRTHGDIAKSIRFGASMV.

The protein belongs to the IMPDH/GMPR family. GuaC type 2 subfamily.

It catalyses the reaction IMP + NH4(+) + NADP(+) = GMP + NADPH + 2 H(+). Its function is as follows. Catalyzes the irreversible NADPH-dependent deamination of GMP to IMP. It functions in the conversion of nucleobase, nucleoside and nucleotide derivatives of G to A nucleotides, and in maintaining the intracellular balance of A and G nucleotides. The protein is GMP reductase of Streptococcus pyogenes serotype M3 (strain ATCC BAA-595 / MGAS315).